The sequence spans 172 residues: Shikimate kinase (172 aa).

14-19 (GAGKTT) contributes to the ATP binding site. Thr-18 contacts Mg(2+). Substrate-binding residues include Asp-36, Arg-60, and Gly-82. Arg-119 provides a ligand contact to ATP. Arg-137 provides a ligand contact to substrate.

This sequence belongs to the shikimate kinase family. In terms of assembly, monomer. It depends on Mg(2+) as a cofactor.

The protein localises to the cytoplasm. The enzyme catalyses shikimate + ATP = 3-phosphoshikimate + ADP + H(+). It participates in metabolic intermediate biosynthesis; chorismate biosynthesis; chorismate from D-erythrose 4-phosphate and phosphoenolpyruvate: step 5/7. In terms of biological role, catalyzes the specific phosphorylation of the 3-hydroxyl group of shikimic acid using ATP as a cosubstrate. This Thermobifida fusca (strain YX) protein is Shikimate kinase.